A 190-amino-acid chain; its full sequence is Elongation factor P-like protein (190 aa).

This sequence belongs to the elongation factor P family.

The protein is Elongation factor P-like protein of Erwinia tasmaniensis (strain DSM 17950 / CFBP 7177 / CIP 109463 / NCPPB 4357 / Et1/99).